The chain runs to 273 residues: Diaminopimelate epimerase (273 aa).

Substrate-binding residues include Asn-11 and Asn-60. The active-site Proton donor is Cys-69. Residues 70–71, Asn-181, and 199–200 contribute to the substrate site; these read GN and ER. Residue Cys-209 is the Proton acceptor of the active site. 210–211 provides a ligand contact to substrate; that stretch reads GT.

Belongs to the diaminopimelate epimerase family. In terms of assembly, homodimer.

The protein resides in the cytoplasm. The enzyme catalyses (2S,6S)-2,6-diaminopimelate = meso-2,6-diaminopimelate. It participates in amino-acid biosynthesis; L-lysine biosynthesis via DAP pathway; DL-2,6-diaminopimelate from LL-2,6-diaminopimelate: step 1/1. Catalyzes the stereoinversion of LL-2,6-diaminopimelate (L,L-DAP) to meso-diaminopimelate (meso-DAP), a precursor of L-lysine and an essential component of the bacterial peptidoglycan. The sequence is that of Diaminopimelate epimerase from Helicobacter pylori (strain Shi470).